We begin with the raw amino-acid sequence, 389 residues long: Galactokinase (389 aa).

34-37 (EHTD) serves as a coordination point for substrate. ATP contacts are provided by residues Ser-68 and 125–131 (GSGLSSS). 2 residues coordinate Mg(2+): Ser-131 and Glu-163. The active-site Proton acceptor is Asp-175. Tyr-225 contributes to the substrate binding site.

This sequence belongs to the GHMP kinase family. GalK subfamily.

It localises to the cytoplasm. It catalyses the reaction alpha-D-galactose + ATP = alpha-D-galactose 1-phosphate + ADP + H(+). The protein operates within carbohydrate metabolism; galactose metabolism. Its function is as follows. Catalyzes the transfer of the gamma-phosphate of ATP to D-galactose to form alpha-D-galactose-1-phosphate (Gal-1-P). In Clostridium beijerinckii (strain ATCC 51743 / NCIMB 8052) (Clostridium acetobutylicum), this protein is Galactokinase.